Reading from the N-terminus, the 147-residue chain is Phosphoribosyl-AMP cyclohydrolase (147 aa).

Position 91 (Asp91) interacts with Mg(2+). Cys92 is a Zn(2+) binding site. The Mg(2+) site is built by Asp93 and Asp95. Residues Cys109 and Cys116 each contribute to the Zn(2+) site.

The protein belongs to the PRA-CH family. As to quaternary structure, homodimer. The cofactor is Mg(2+). Requires Zn(2+) as cofactor.

The protein localises to the cytoplasm. It carries out the reaction 1-(5-phospho-beta-D-ribosyl)-5'-AMP + H2O = 1-(5-phospho-beta-D-ribosyl)-5-[(5-phospho-beta-D-ribosylamino)methylideneamino]imidazole-4-carboxamide. It functions in the pathway amino-acid biosynthesis; L-histidine biosynthesis; L-histidine from 5-phospho-alpha-D-ribose 1-diphosphate: step 3/9. Its function is as follows. Catalyzes the hydrolysis of the adenine ring of phosphoribosyl-AMP. This chain is Phosphoribosyl-AMP cyclohydrolase, found in Rhodopseudomonas palustris (strain BisA53).